Reading from the N-terminus, the 431-residue chain is Tryptophan--tRNA ligase (431 aa).

ATP is bound by residues T12 to S14 and G20 to N21. The 'HIGH' region motif lies at P13 to N21. L-tryptophan is bound at residue D145. ATP is bound by residues G157–D159, L197, and K204–S208. Positions K204–S208 match the 'KMSKS' region motif.

The protein belongs to the class-I aminoacyl-tRNA synthetase family. Homodimer.

The protein localises to the cytoplasm. The enzyme catalyses tRNA(Trp) + L-tryptophan + ATP = L-tryptophyl-tRNA(Trp) + AMP + diphosphate + H(+). Functionally, catalyzes the attachment of tryptophan to tRNA(Trp). The sequence is that of Tryptophan--tRNA ligase from Xanthomonas campestris pv. campestris (strain ATCC 33913 / DSM 3586 / NCPPB 528 / LMG 568 / P 25).